A 157-amino-acid chain; its full sequence is Protein Smg homolog (157 aa).

Belongs to the Smg family.

The protein is Protein Smg homolog of Pseudoalteromonas translucida (strain TAC 125).